The primary structure comprises 124 residues: Small ribosomal subunit protein bS6 (124 aa).

Residues 99–124 are disordered; the sequence is PLPAPRVMPGSEAAQQQQAEAAASAD. The segment covering 109–124 has biased composition (low complexity); sequence SEAAQQQQAEAAASAD.

The protein belongs to the bacterial ribosomal protein bS6 family.

Its function is as follows. Binds together with bS18 to 16S ribosomal RNA. The polypeptide is Small ribosomal subunit protein bS6 (Synechococcus sp. (strain CC9605)).